A 407-amino-acid polypeptide reads, in one-letter code: Monooxygenase 2 (407 aa).

It belongs to the 3-hydroxybenzoate 6-hydroxylase family. Monomer. It depends on FAD as a cofactor. In terms of tissue distribution, expressed in seeds, seedlings, roots, leaves, flowers, pollen and siliques.

This Arabidopsis thaliana (Mouse-ear cress) protein is Monooxygenase 2.